The primary structure comprises 488 residues: Glutamyl-tRNA(Gln) amidotransferase subunit A (488 aa).

Residues K77 and S152 each act as charge relay system in the active site. S176 serves as the catalytic Acyl-ester intermediate.

This sequence belongs to the amidase family. GatA subfamily. In terms of assembly, heterotrimer of A, B and C subunits.

The catalysed reaction is L-glutamyl-tRNA(Gln) + L-glutamine + ATP + H2O = L-glutaminyl-tRNA(Gln) + L-glutamate + ADP + phosphate + H(+). Functionally, allows the formation of correctly charged Gln-tRNA(Gln) through the transamidation of misacylated Glu-tRNA(Gln) in organisms which lack glutaminyl-tRNA synthetase. The reaction takes place in the presence of glutamine and ATP through an activated gamma-phospho-Glu-tRNA(Gln). The protein is Glutamyl-tRNA(Gln) amidotransferase subunit A of Streptococcus agalactiae serotype III (strain NEM316).